Consider the following 307-residue polypeptide: UPF0276 protein Bphyt_5128 (307 aa).

Belongs to the UPF0276 family.

This chain is UPF0276 protein Bphyt_5128, found in Paraburkholderia phytofirmans (strain DSM 17436 / LMG 22146 / PsJN) (Burkholderia phytofirmans).